The chain runs to 221 residues: PKHD-type hydroxylase PMT9312_1262 (221 aa).

In terms of domain architecture, Fe2OG dioxygenase spans 80 to 174 (IIHGIMFTKS…RLVCVGWIES (95 aa)). Residues His98, Asp100, and His155 each contribute to the Fe cation site. Arg165 is a 2-oxoglutarate binding site.

Requires Fe(2+) as cofactor. The cofactor is L-ascorbate.

This Prochlorococcus marinus (strain MIT 9312) protein is PKHD-type hydroxylase PMT9312_1262.